The sequence spans 447 residues: ATP-dependent protease ATPase subunit HslU (447 aa).

ATP-binding positions include Ile18, 60–65 (GVGKTE), Asp259, Glu325, and Arg397.

Belongs to the ClpX chaperone family. HslU subfamily. In terms of assembly, a double ring-shaped homohexamer of HslV is capped on each side by a ring-shaped HslU homohexamer. The assembly of the HslU/HslV complex is dependent on binding of ATP.

The protein resides in the cytoplasm. ATPase subunit of a proteasome-like degradation complex; this subunit has chaperone activity. The binding of ATP and its subsequent hydrolysis by HslU are essential for unfolding of protein substrates subsequently hydrolyzed by HslV. HslU recognizes the N-terminal part of its protein substrates and unfolds these before they are guided to HslV for hydrolysis. This chain is ATP-dependent protease ATPase subunit HslU, found in Burkholderia pseudomallei (strain 668).